The primary structure comprises 491 residues: Ketol-acid reductoisomerase (NADP(+)) (491 aa).

The KARI N-terminal Rossmann domain maps to 15-208; sequence AQLGKCRFMG…GGHRAGVLES (194 aa). NADP(+) contacts are provided by residues 45 to 48, R68, R76, S78, and 108 to 110; these read CGAQ and DKQ. H132 is a catalytic residue. G158 lines the NADP(+) pocket. 2 consecutive KARI C-terminal knotted domains span residues 209-344 and 345-484; these read SFVA…TAPQ and YEGK…MTDM. Mg(2+)-binding residues include D217, E221, E389, and E393. S414 is a substrate binding site.

This sequence belongs to the ketol-acid reductoisomerase family. Mg(2+) is required as a cofactor.

The catalysed reaction is (2R)-2,3-dihydroxy-3-methylbutanoate + NADP(+) = (2S)-2-acetolactate + NADPH + H(+). It carries out the reaction (2R,3R)-2,3-dihydroxy-3-methylpentanoate + NADP(+) = (S)-2-ethyl-2-hydroxy-3-oxobutanoate + NADPH + H(+). It functions in the pathway amino-acid biosynthesis; L-isoleucine biosynthesis; L-isoleucine from 2-oxobutanoate: step 2/4. It participates in amino-acid biosynthesis; L-valine biosynthesis; L-valine from pyruvate: step 2/4. Its function is as follows. Involved in the biosynthesis of branched-chain amino acids (BCAA). Catalyzes an alkyl-migration followed by a ketol-acid reduction of (S)-2-acetolactate (S2AL) to yield (R)-2,3-dihydroxy-isovalerate. In the isomerase reaction, S2AL is rearranged via a Mg-dependent methyl migration to produce 3-hydroxy-3-methyl-2-ketobutyrate (HMKB). In the reductase reaction, this 2-ketoacid undergoes a metal-dependent reduction by NADPH to yield (R)-2,3-dihydroxy-isovalerate. This chain is Ketol-acid reductoisomerase (NADP(+)), found in Citrobacter koseri (strain ATCC BAA-895 / CDC 4225-83 / SGSC4696).